The sequence spans 478 residues: UDP-glycosyltransferase 90A1 (478 aa).

UDP-alpha-D-glucose contacts are provided by residues Thr-289, 343-345 (VDQ), 360-368 (HCGWNSAQE), and 382-385 (MAEQ).

The protein belongs to the UDP-glycosyltransferase family.

The sequence is that of UDP-glycosyltransferase 90A1 (UGT90A1) from Arabidopsis thaliana (Mouse-ear cress).